Reading from the N-terminus, the 702-residue chain is Choline transporter-like protein 5-A (702 aa).

A helical transmembrane segment spans residues 21 to 41 (VLCCVLFVIVILGYIALGTVA). Residues 42 to 225 (WIHGDPRKVI…KIVEDYASCW (184 aa)) are Extracellular-facing. Asn120, Asn173, and Asn180 each carry an N-linked (GlcNAc...) asparagine glycan. The chain crosses the membrane as a helical span at residues 226–246 (YWIVIGLFIALVISLIFILLL). Topologically, residues 247-249 (RFT) are cytoplasmic. The helical transmembrane segment at 250–270 (AGFLLWFIIFAVILLVAYGIW) threads the bilayer. The Extracellular segment spans residues 271–308 (HCYWEFAVLRETPGADVTISDIGFQTDLHVYLQLSQTW). The chain crosses the membrane as a helical span at residues 309–329 (LVFMVTLGLTEASIVLMLIFL). Residues 330–334 (RKRVR) are Cytoplasmic-facing. Residues 335-355 (IAIALLREGSRAISYIMSALF) traverse the membrane as a helical segment. Over 356–357 (YP) the chain is Extracellular. The chain crosses the membrane as a helical span at residues 358 to 378 (IITFVLLAICISYWAMTALFL). At 379 to 443 (ASSGDAVYKV…RYIFILQLCN (65 aa)) the chain is on the cytoplasmic side. The chain crosses the membrane as a helical span at residues 444–464 (LLVFLWLVNFTIALGQCTVAG). Residues 465 to 498 (AFASYYWARRKPADIPPCPVFSSFSRALRYHTGS) lie on the Extracellular side of the membrane. The helical transmembrane segment at 499-519 (LAFGSLILAVVQLIRVILEYL) threads the bilayer. Topologically, residues 520 to 593 (DHKLKGAHNA…RVAVLDKVTD (74 aa)) are cytoplasmic. A helical transmembrane segment spans residues 594–614 (FLLFLGKLLIAGSVGVIAFFL). Residues 615 to 632 (FTRKIPIIQEEVPVLNYY) are Extracellular-facing. The helical transmembrane segment at 633–653 (CVPLLTVILGSYLIAHSFFSV) threads the bilayer. Over 654-699 (YAMCVDTLFLCFCEDLERNDGTTAKPFFMSPGLKRILGKAEQSPKK) the chain is Cytoplasmic.

Belongs to the CTL (choline transporter-like) family.

It localises to the cell membrane. It catalyses the reaction choline(out) + n H(+)(in) = choline(in) + n H(+)(out). In terms of biological role, choline/H+ antiporter. This chain is Choline transporter-like protein 5-A (slc44a5a), found in Danio rerio (Zebrafish).